The chain runs to 185 residues: Large ribosomal subunit protein uL5 (185 aa).

The protein belongs to the universal ribosomal protein uL5 family. Part of the 50S ribosomal subunit; part of the 5S rRNA/L5/L18/L25 subcomplex. Contacts the 5S rRNA and the P site tRNA. Forms a bridge to the 30S subunit in the 70S ribosome.

Its function is as follows. This is one of the proteins that bind and probably mediate the attachment of the 5S RNA into the large ribosomal subunit, where it forms part of the central protuberance. In the 70S ribosome it contacts protein S13 of the 30S subunit (bridge B1b), connecting the 2 subunits; this bridge is implicated in subunit movement. Contacts the P site tRNA; the 5S rRNA and some of its associated proteins might help stabilize positioning of ribosome-bound tRNAs. In Protochlamydia amoebophila (strain UWE25), this protein is Large ribosomal subunit protein uL5.